Consider the following 360-residue polypeptide: Alpha-2-macroglobulin receptor-associated protein (360 aa).

The N-terminal stretch at 1 to 28 (MAPRRERVSTLPRLQLLVLLLLPLMLVP) is a signal peptide. Phosphoserine occurs at positions 53 and 138. A coiled-coil region spans residues 184 to 302 (EKIQEYNVLL…KHNHYQKQLE (119 aa)). An LDL receptor binding region spans residues 240–356 (RLRKVSHQGY…DLSSRVSRAR (117 aa)). A glycan (N-linked (GlcNAc...) asparagine) is linked at asparagine 271. The Prevents secretion from ER signature appears at 357–360 (HNEL).

This sequence belongs to the alpha-2-MRAP family. In terms of assembly, interacts with the LRP1/alpha-2-macroglobulin receptor heavy and light chains; the interaction is transient and coincides with a reduction of ligand binding by the receptor. Interacts with LRP2/glycoprotein 330. Interacts with LRP1B; binding is followed by internalization and degradation. Interacts with LDLR. Interacts with SORL1. Interacts with LRP1; this interaction is followed by rapid internalization. In terms of processing, N-glycosylated. In terms of tissue distribution, highly expressed in PYS-2 parietal endoderm cells and in the kidney. The RNA level increased about 10-fold during differentiation of F9 embryonal carcinoma cells to parietal endoderm cells.

Its subcellular location is the rough endoplasmic reticulum lumen. The protein localises to the endoplasmic reticulum-Golgi intermediate compartment lumen. It is found in the golgi apparatus. It localises to the cis-Golgi network. The protein resides in the golgi apparatus lumen. Its subcellular location is the endosome lumen. The protein localises to the cell surface. Functionally, molecular chaperone for LDL receptor-related proteins that may regulate their ligand binding activity along the secretory pathway. This chain is Alpha-2-macroglobulin receptor-associated protein (Lrpap1), found in Mus musculus (Mouse).